Reading from the N-terminus, the 426-residue chain is Serine--tRNA ligase (426 aa).

233 to 235 (TSE) contacts L-serine. 264–266 (RAE) provides a ligand contact to ATP. L-serine is bound at residue E287. An ATP-binding site is contributed by 351–354 (EISS). Residue S387 coordinates L-serine.

It belongs to the class-II aminoacyl-tRNA synthetase family. Type-1 seryl-tRNA synthetase subfamily. Homodimer. The tRNA molecule binds across the dimer.

The protein localises to the cytoplasm. It carries out the reaction tRNA(Ser) + L-serine + ATP = L-seryl-tRNA(Ser) + AMP + diphosphate + H(+). It catalyses the reaction tRNA(Sec) + L-serine + ATP = L-seryl-tRNA(Sec) + AMP + diphosphate + H(+). The protein operates within aminoacyl-tRNA biosynthesis; selenocysteinyl-tRNA(Sec) biosynthesis; L-seryl-tRNA(Sec) from L-serine and tRNA(Sec): step 1/1. Its function is as follows. Catalyzes the attachment of serine to tRNA(Ser). Is also able to aminoacylate tRNA(Sec) with serine, to form the misacylated tRNA L-seryl-tRNA(Sec), which will be further converted into selenocysteinyl-tRNA(Sec). This is Serine--tRNA ligase from Xanthomonas campestris pv. campestris (strain 8004).